The chain runs to 254 residues: Pimeloyl-[acyl-carrier protein] methyl ester esterase (254 aa).

One can recognise an AB hydrolase-1 domain in the interval 14-238; sequence VVMLHGWGLH…QASHAPFLSH (225 aa). Substrate contacts are provided by residues Trp20, 80–81, and 142–146; these read SL and FLALQ. Ser80 (nucleophile) is an active-site residue. Residues Asp204 and His232 contribute to the active site. Position 232 (His232) interacts with substrate.

Belongs to the AB hydrolase superfamily. Carboxylesterase BioH family. Monomer.

It localises to the cytoplasm. It carries out the reaction 6-carboxyhexanoyl-[ACP] methyl ester + H2O = 6-carboxyhexanoyl-[ACP] + methanol + H(+). It functions in the pathway cofactor biosynthesis; biotin biosynthesis. The physiological role of BioH is to remove the methyl group introduced by BioC when the pimeloyl moiety is complete. It allows to synthesize pimeloyl-ACP via the fatty acid synthetic pathway through the hydrolysis of the ester bonds of pimeloyl-ACP esters. In Chromobacterium violaceum (strain ATCC 12472 / DSM 30191 / JCM 1249 / CCUG 213 / NBRC 12614 / NCIMB 9131 / NCTC 9757 / MK), this protein is Pimeloyl-[acyl-carrier protein] methyl ester esterase.